A 741-amino-acid chain; its full sequence is Ethylene receptor 2 (741 aa).

The next 3 membrane-spanning stretches (helical) occupy residues Ile-23–Val-43, Trp-53–Leu-73, and Ile-92–Leu-112. Residues Cys-65 and His-69 each contribute to the Cu cation site. Positions Asp-158–Leu-307 constitute a GAF domain. The region spanning Val-350–Glu-589 is the Histidine kinase domain. His-353 is subject to Phosphohistidine; by autocatalysis. A Response regulatory domain is found at Lys-615–Leu-732. Asp-663 is modified (4-aspartylphosphate).

It belongs to the ethylene receptor family. Homodimer; disulfide-linked. Requires Cu cation as cofactor. In terms of processing, activation probably requires a transfer of a phosphate group between a His in the transmitter domain and an Asp of the receiver domain.

It is found in the endoplasmic reticulum membrane. It catalyses the reaction ATP + protein L-histidine = ADP + protein N-phospho-L-histidine.. Its function is as follows. May act early in the ethylene signal transduction pathway, possibly as an ethylene receptor, or as a regulator of the pathway. This Pelargonium hortorum (Common geranium) protein is Ethylene receptor 2 (ETR2).